The following is a 342-amino-acid chain: Keratin-associated protein 29-1 (342 aa).

5 tandem repeats follow at residues 5–9, 91–95, 239–243, 309–313, and 324–328. The interval 5 to 328 is 5 X 5 AA repeats of C-C-X(3); the sequence is CCPENPTAVP…SSGPGCCPPT (324 aa).

This sequence belongs to the KRTAP type 10 family.

The protein is Keratin-associated protein 29-1 (Krtap29-1) of Mus musculus (Mouse).